The primary structure comprises 467 residues: H(+)/Cl(-) exchange transporter ClcA (467 aa).

The Cytoplasmic segment spans residues 1–30 (MTKRERIVKSVLAHVPKDAINQFVSRGSTP). Residues 31-67 (FSVLIMAAIVGTLAGFVGTYFELAVHFVSETRTEWLR) form a helical membrane-spanning segment. At 68–74 (SEIGSVL) the chain is on the periplasmic side. Residues 75-98 (PLWLAAVLISALLAFIGYFLVHRF) form a helical membrane-spanning segment. The Selectivity filter part_1 motif lies at 104-108 (GSGIP). S105 provides a ligand contact to chloride. Positions 107 to 114 (IPEIEGAM) form an intramembrane region, helical. Residues 115 to 121 (DNIRPVR) are Cytoplasmic-facing. A run of 2 helical transmembrane segments spans residues 122-139 (WWRV…ALGS) and 146-164 (EGPT…TDIF). The Selectivity filter part_2 motif lies at 144 to 148 (GREGP). Topologically, residues 165 to 174 (RVKDDDTRHS) are cytoplasmic. Intramembrane regions (helical) lie at residues 175 to 187 (LLAS…LAAA) and 191 to 199 (PLAGIMFVV). At 200 to 212 (EEMRPQFRYSLIS) the chain is on the cytoplasmic side. Residues 213 to 230 (IRAVIISAIMANIVFRAI) form a helical membrane-spanning segment. At 231 to 250 (NGQDAVITMPQYQSPALQTL) the chain is on the periplasmic side. Residues 251 to 279 (WLFLLLGALFGVFGVIFNKLITVAQDSFV) form a helical membrane-spanning segment. Topologically, residues 280 to 285 (AIHKND) are cytoplasmic. The helical transmembrane segment at 286-307 (RKRYLITGSILGGVFGLLLLYV) threads the bilayer. Residues 308–327 (PQLTGGGIALIPDVTTGNYS) lie on the Periplasmic side of the membrane. The next 2 membrane-spanning stretches (helical) occupy residues 328-347 (ISIL…LCFG) and 353-374 (GIFA…ASAD). A Selectivity filter part_3 motif is present at residues 353–357 (GIFAP). Chloride is bound by residues I354 and F355. Residues 375 to 384 (VLLPTLDIEP) are Periplasmic-facing. Residues 385 to 399 (GVFAIAGMGALFAAT) constitute an intramembrane region (helical). Residues 400-402 (VRA) constitute an intramembrane region (note=Loop between two helices). Positions 403 to 414 (PITGILLVIEMT) form an intramembrane region, helical. An intramembrane region (note=Loop between two helices) is located at residues 415–419 (NNYYL). Residues 420 to 436 (ILPLIITCLGAVIVAQL) traverse the membrane as a helical segment. The Cytoplasmic segment spans residues 437 to 467 (LGGQPIYSQLLHRTLKNDKLRQQDLPENQAS). Residue Y443 participates in chloride binding.

This sequence belongs to the chloride channel (TC 2.A.49) family. ClcA subfamily. Homodimer.

It is found in the cell inner membrane. It carries out the reaction 2 chloride(in) + H(+)(out) = 2 chloride(out) + H(+)(in). Proton-coupled chloride transporter. Functions as antiport system and exchanges two chloride ions for 1 proton. Probably acts as an electrical shunt for an outwardly-directed proton pump that is linked to amino acid decarboxylation, as part of the extreme acid resistance (XAR) response. In Vibrio parahaemolyticus serotype O3:K6 (strain RIMD 2210633), this protein is H(+)/Cl(-) exchange transporter ClcA.